A 241-amino-acid polypeptide reads, in one-letter code: Neuromodulin (241 aa).

Positions 1 to 26 are enriched in basic and acidic residues; that stretch reads TKQVEKNEDGDQKIEQDGIKPEDKAH. The segment at 1–241 is disordered; that stretch reads TKQVEKNEDG…EESKADQENA (241 aa). The IQ domain occupies 25-54; sequence AHKAATKIQASFRGHITRKKLKGEKKGDAP. 2 stretches are compositionally biased toward low complexity: residues 80–95 and 118–131; these read APAA…AQQE and SEQP…PAAS. Basic and acidic residues-rich tracts occupy residues 132–147 and 159–171; these read SEEK…REST and KADE…EPKQ. Positions 172–198 are enriched in low complexity; the sequence is ADVPAADTTATTTPAAEDATAKATAQP. Composition is skewed to basic and acidic residues over residues 208–220 and 232–241; these read TEEK…ETKP and EESKADQENA.

It belongs to the neuromodulin family. As to quaternary structure, binds calmodulin with a greater affinity in the absence of Ca(2+) than in its presence. Post-translationally, palmitoylated. Palmitoylation is essential for plasma membrane association.

The protein resides in the cell membrane. The protein localises to the cell projection. It is found in the growth cone membrane. It localises to the synapse. Its subcellular location is the filopodium membrane. In terms of biological role, this protein is associated with nerve growth. It is a major component of the motile 'growth cones' that form the tips of elongating axons. Plays a role in axonal and dendritic filopodia induction. This Serinus canaria (Island canary) protein is Neuromodulin (GAP43).